Reading from the N-terminus, the 315-residue chain is Mannose-6-phosphate isomerase ManA (315 aa).

Residues His-97, Glu-115, and His-172 each coordinate Zn(2+). The active site involves Arg-192.

This sequence belongs to the mannose-6-phosphate isomerase type 1 family. Zn(2+) is required as a cofactor.

The enzyme catalyses D-mannose 6-phosphate = D-fructose 6-phosphate. This Bacillus subtilis (strain 168) protein is Mannose-6-phosphate isomerase ManA (manA).